The chain runs to 845 residues: U-box domain-containing protein 52 (845 aa).

Disordered regions lie at residues 180–210 (RPSESDASGSIRFERSSSTSGSTDSPRLPPE) and 229–258 (SPALKHSMGSNAVAQMDTSSSGTDQEEVST). The segment covering 187–204 (SGSIRFERSSSTSGSTDS) has biased composition (low complexity). A compositionally biased stretch (polar residues) spans 236–251 (MGSNAVAQMDTSSSGT). Positions 351 to 468 (SITDNQVNLN…REKDKLQASL (118 aa)) form a coiled coil. Residues 490-754 (FAENLKIGIG…DLKDQIIPAL (265 aa)) enclose the Protein kinase domain. ATP contacts are provided by residues 496–504 (IGIGAYGSV) and K517. D612 functions as the Proton acceptor in the catalytic mechanism. One can recognise a U-box domain in the interval 774 to 845 (GPPSHFICPL…AIMEWKSNKR (72 aa)).

Belongs to the protein kinase superfamily. Ser/Thr protein kinase family.

It carries out the reaction L-seryl-[protein] + ATP = O-phospho-L-seryl-[protein] + ADP + H(+). The catalysed reaction is L-threonyl-[protein] + ATP = O-phospho-L-threonyl-[protein] + ADP + H(+). The enzyme catalyses S-ubiquitinyl-[E2 ubiquitin-conjugating enzyme]-L-cysteine + [acceptor protein]-L-lysine = [E2 ubiquitin-conjugating enzyme]-L-cysteine + N(6)-ubiquitinyl-[acceptor protein]-L-lysine.. It participates in protein modification; protein ubiquitination. Functions as an E3 ubiquitin ligase. The chain is U-box domain-containing protein 52 (PUB52) from Arabidopsis thaliana (Mouse-ear cress).